A 637-amino-acid chain; its full sequence is 1-deoxy-D-xylulose-5-phosphate synthase (637 aa).

Residues H82 and 123 to 125 (GHA) each bind thiamine diphosphate. D154 lines the Mg(2+) pocket. Residues 155–156 (GS), N183, Y295, and E378 each bind thiamine diphosphate. N183 lines the Mg(2+) pocket.

The protein belongs to the transketolase family. DXPS subfamily. Homodimer. Mg(2+) serves as cofactor. It depends on thiamine diphosphate as a cofactor.

The catalysed reaction is D-glyceraldehyde 3-phosphate + pyruvate + H(+) = 1-deoxy-D-xylulose 5-phosphate + CO2. The protein operates within metabolic intermediate biosynthesis; 1-deoxy-D-xylulose 5-phosphate biosynthesis; 1-deoxy-D-xylulose 5-phosphate from D-glyceraldehyde 3-phosphate and pyruvate: step 1/1. In terms of biological role, catalyzes the acyloin condensation reaction between C atoms 2 and 3 of pyruvate and glyceraldehyde 3-phosphate to yield 1-deoxy-D-xylulose-5-phosphate (DXP). The polypeptide is 1-deoxy-D-xylulose-5-phosphate synthase (Lawsonia intracellularis (strain PHE/MN1-00)).